The chain runs to 1318 residues: Uromodulin-like 1 (1318 aa).

An N-terminal signal peptide occupies residues Met-1–Ala-21. Residues Ser-22–Tyr-1272 lie on the Extracellular side of the membrane. Positions Gly-33–Leu-106 constitute an EMI domain. Intrachain disulfides connect Cys-37–Cys-94, Cys-61–Cys-70, and Cys-93–Cys-104. Residue Asn-89 is glycosylated (N-linked (GlcNAc...) asparagine). Residue Asn-109 is glycosylated (N-linked (GlcNAc...) asparagine). In terms of domain architecture, WAP spans Phe-114 to Ala-158. An N-linked (GlcNAc...) asparagine glycan is attached at Asn-172. The EGF-like 1; calcium-binding domain maps to Asp-264–Pro-313. Residues Pro-314–Gln-398 form the Fibronectin type-III 1 domain. 3 N-linked (GlcNAc...) asparagine glycosylation sites follow: Asn-322, Asn-335, and Asn-417. The SEA 1 domain maps to Asn-396–Glu-510. In terms of domain architecture, EGF-like 2; calcium-binding spans Asp-507 to Glu-552. 3 disulfides stabilise this stretch: Cys-511–Cys-525, Cys-519–Cys-534, and Cys-536–Cys-551. Asn-585 carries an N-linked (GlcNAc...) asparagine glycan. Residues Gly-593 to His-655 are disordered. Positions Val-702–Lys-791 constitute a Fibronectin type-III 2 domain. An N-linked (GlcNAc...) asparagine glycan is attached at Asn-713. Residues Ala-788 to Glu-900 form the SEA 2 domain. The EGF-like 3; calcium-binding domain maps to Asp-897 to Glu-938. 2 disulfide bridges follow: Cys-901–Cys-914 and Cys-908–Cys-923. The tract at residues Glu-938–Arg-957 is disordered. Residues Asn-984 and Asn-1050 are each glycosylated (N-linked (GlcNAc...) asparagine). Residues Leu-992–Phe-1235 form the ZP domain. An intrachain disulfide couples Cys-1157 to Cys-1215. A helical membrane pass occupies residues Val-1273–Val-1293. The Cytoplasmic segment spans residues Arg-1294–Glu-1318.

Isoform 4 is expressed at low level in kidney, testis and fetal thymus. Isoform 3 is expressed at low level in prostate, testis and fetal thymus.

It localises to the cell membrane. The protein localises to the cytoplasm. This Homo sapiens (Human) protein is Uromodulin-like 1 (UMODL1).